The chain runs to 354 residues: Hyaluronan and proteoglycan link protein 1 (354 aa).

The propeptide occupies methionine 1–leucine 9. The Ig-like V-type domain occupies proline 38–valine 152. N-linked (GlcNAc...) asparagine glycosylation occurs at asparagine 56. Cystine bridges form between cysteine 61/cysteine 139, cysteine 181/cysteine 252, cysteine 205/cysteine 226, cysteine 279/cysteine 349, and cysteine 304/cysteine 325. 2 consecutive Link domains span residues valine 159–threonine 254 and glycine 259–arginine 351.

This sequence belongs to the HAPLN family.

Its subcellular location is the secreted. It localises to the extracellular space. The protein localises to the extracellular matrix. In terms of biological role, stabilizes the aggregates of proteoglycan monomers with hyaluronic acid in the extracellular cartilage matrix. The polypeptide is Hyaluronan and proteoglycan link protein 1 (Hapln1) (Rattus norvegicus (Rat)).